A 599-amino-acid polypeptide reads, in one-letter code: Calmodulin-binding protein 60 E (599 aa).

Residues 1-21 (MNKRGYECSQEDTDKLPESKR) are disordered. Residues 1-80 (MNKRGYECSQ…LTSRSPEPKR (80 aa)) form a calmodulin-binding region. The tract at residues 150 to 273 (EDDEDWTREH…VLHKKLLKAN (124 aa)) is DNA-binding.

This sequence belongs to the plant ACBP60 protein family. Interacts with calmodulin (CaM).

The protein localises to the nucleus. In terms of biological role, transcription activator that binds DNA in a sequence-specific manner, likely 5'-GAAATTTTGG-3', to promote the expression of target genes. In Arabidopsis thaliana (Mouse-ear cress), this protein is Calmodulin-binding protein 60 E.